Here is a 328-residue protein sequence, read N- to C-terminus: Alanine racemase (328 aa).

The active-site Proton acceptor; specific for D-alanine is lysine 33. Residue lysine 33 is modified to N6-(pyridoxal phosphate)lysine. Substrate is bound at residue arginine 118. Tyrosine 237 (proton acceptor; specific for L-alanine) is an active-site residue. Position 283 (methionine 283) interacts with substrate.

This sequence belongs to the alanine racemase family. Requires pyridoxal 5'-phosphate as cofactor.

The catalysed reaction is L-alanine = D-alanine. The protein operates within amino-acid biosynthesis; D-alanine biosynthesis; D-alanine from L-alanine: step 1/1. In terms of biological role, catalyzes the interconversion of L-alanine and D-alanine. May also act on other amino acids. In Campylobacter jejuni subsp. doylei (strain ATCC BAA-1458 / RM4099 / 269.97), this protein is Alanine racemase (alr).